A 1206-amino-acid polypeptide reads, in one-letter code: DNA polymerase beta (1206 aa).

4 repeat units span residues alanine 1071–proline 1074, alanine 1075–proline 1078, alanine 1079–proline 1082, and alanine 1083–alanine 1086. Residues alanine 1071–alanine 1086 form a 4 X 4 AA tandem repeats of A-G-[NK]-[PA] region.

Belongs to the DNA polymerase type-B family.

It carries out the reaction DNA(n) + a 2'-deoxyribonucleoside 5'-triphosphate = DNA(n+1) + diphosphate. Its function is as follows. DNA-directed DNA polymerase involved in viral DNA replication. This is DNA polymerase beta from Ornithodoros (relapsing fever ticks).